The primary structure comprises 638 residues: ATP-dependent zinc metalloprotease FtsH (638 aa).

Residues 1-15 (MDNNHKGPNDPNSKK) are Cytoplasmic-facing. The chain crosses the membrane as a helical span at residues 16 to 36 (PLLQNPLLLIAIFGIIIFVAM). The Periplasmic segment spans residues 37 to 122 (RVMNSDEGFG…INYSGFSESN (86 aa)). A helical transmembrane segment spans residues 123–143 (FFADILGWLLPVLVILGLWMF). Residues 144–638 (MASRMQKNMG…RLVPLEEHAS (495 aa)) are Cytoplasmic-facing. Position 216 to 223 (216 to 223 (GPPGTGKT)) interacts with ATP. His440 serves as a coordination point for Zn(2+). The active site involves Glu441. 2 residues coordinate Zn(2+): His444 and Asp517.

This sequence in the central section; belongs to the AAA ATPase family. In the C-terminal section; belongs to the peptidase M41 family. Homohexamer. Zn(2+) serves as cofactor.

The protein localises to the cell inner membrane. Functionally, acts as a processive, ATP-dependent zinc metallopeptidase for both cytoplasmic and membrane proteins. Plays a role in the quality control of integral membrane proteins. This is ATP-dependent zinc metalloprotease FtsH from Helicobacter felis (strain ATCC 49179 / CCUG 28539 / NCTC 12436 / CS1).